The sequence spans 216 residues: Guanylate kinase (216 aa).

Residues 15 to 193 (GNLFMVVAPS…ALEELRNVVR (179 aa)) enclose the Guanylate kinase-like domain. 22-29 (APSGAGKS) is a binding site for ATP.

Belongs to the guanylate kinase family.

The protein resides in the cytoplasm. The enzyme catalyses GMP + ATP = GDP + ADP. Its function is as follows. Essential for recycling GMP and indirectly, cGMP. In Cupriavidus pinatubonensis (strain JMP 134 / LMG 1197) (Cupriavidus necator (strain JMP 134)), this protein is Guanylate kinase.